The following is a 100-amino-acid chain: NADH-quinone oxidoreductase subunit K (100 aa).

A run of 3 helical transmembrane segments spans residues 4-24 (LTHG…GLVI), 28-48 (LLFM…AFVV), and 60-80 (VMYI…LALL).

This sequence belongs to the complex I subunit 4L family. As to quaternary structure, NDH-1 is composed of 13 different subunits. Subunits NuoA, H, J, K, L, M, N constitute the membrane sector of the complex.

It localises to the cell inner membrane. It catalyses the reaction a quinone + NADH + 5 H(+)(in) = a quinol + NAD(+) + 4 H(+)(out). Its function is as follows. NDH-1 shuttles electrons from NADH, via FMN and iron-sulfur (Fe-S) centers, to quinones in the respiratory chain. The immediate electron acceptor for the enzyme in this species is believed to be ubiquinone. Couples the redox reaction to proton translocation (for every two electrons transferred, four hydrogen ions are translocated across the cytoplasmic membrane), and thus conserves the redox energy in a proton gradient. This is NADH-quinone oxidoreductase subunit K from Enterobacter sp. (strain 638).